A 582-amino-acid polypeptide reads, in one-letter code: Calcium-dependent protein kinase 24 (582 aa).

A disordered region spans residues 1–36 (MGSCVSSPLKGSPFGKRPVRRRHSSNSRTSSVPRFD). Gly-2 carries N-myristoyl glycine lipidation. Positions 66–324 (YDLGKELGRG…VQEVLEHPWI (259 aa)) constitute a Protein kinase domain. Residues 72 to 80 (LGRGEFGVT) and Lys-95 each bind ATP. The Proton acceptor role is filled by Asp-190. Ser-230 carries the phosphoserine modification. The interval 330 to 360 (APNVNLGDNVRTKIQQFLLMNRFKKKVLRIV) is autoinhibitory domain. 4 consecutive EF-hand domains span residues 367–402 (EEIA…IGQV), 403–438 (VPDG…LKRM), 439–474 (GCDE…DKLG), and 478–513 (GNDQ…GTDW). 18 residues coordinate Ca(2+): Asp-380, Asp-382, Asn-384, His-386, Glu-391, Asp-416, Asp-418, Asn-420, Met-422, Glu-427, Asp-452, Asn-454, Asn-456, Glu-463, Asp-491, Asn-493, Asp-495, and Arg-497. Ser-499 bears the Phosphoserine mark. Residue Glu-502 participates in Ca(2+) binding.

It belongs to the protein kinase superfamily. Ser/Thr protein kinase family. CDPK subfamily.

The protein resides in the membrane. It catalyses the reaction L-seryl-[protein] + ATP = O-phospho-L-seryl-[protein] + ADP + H(+). It carries out the reaction L-threonyl-[protein] + ATP = O-phospho-L-threonyl-[protein] + ADP + H(+). With respect to regulation, activated by calcium. Autophosphorylation may play an important role in the regulation of the kinase activity. Its function is as follows. May play a role in signal transduction pathways that involve calcium as a second messenger. The sequence is that of Calcium-dependent protein kinase 24 (CPK24) from Arabidopsis thaliana (Mouse-ear cress).